The sequence spans 894 residues: Nitrate reductase [NADPH] (894 aa).

Positions 1-79 (MAVKSQLGVT…PEDLKTPDHR (79 aa)) are disordered. A compositionally biased stretch (polar residues) spans 7-16 (LGVTYTTKTF). Residues 69-79 (LPEDLKTPDHR) are compositionally biased toward basic and acidic residues. Cys169 serves as a coordination point for Mo-molybdopterin. The Cytochrome b5 heme-binding domain maps to 535–610 (VRIISLEELK…MPQYHIGTLN (76 aa)). Positions 570 and 593 each coordinate heme. Residues 638–749 (KYWSKAILET…KGPVGKFEYL (112 aa)) enclose the FAD-binding FR-type domain. Residues 692 to 695 (RAYT), 709 to 713 (LIKIY), 723 to 725 (KMT), Ser773, and Thr776 contribute to the FAD site.

Belongs to the nitrate reductase family. Homodimer. It depends on FAD as a cofactor. Heme serves as cofactor. The cofactor is Mo-molybdopterin.

The enzyme catalyses nitrite + NADP(+) + H2O = nitrate + NADPH + H(+). Its function is as follows. Nitrate reductase is a key enzyme involved in the first step of nitrate assimilation in plants, fungi and bacteria. This is Nitrate reductase [NADPH] (NIA) from Beauveria bassiana (White muscardine disease fungus).